Consider the following 182-residue polypeptide: Nucleosome assembly protein 1-like 5 (182 aa).

The segment at 1–71 (MADSENQGPA…APKPKNDFIE (71 aa)) is disordered. 2 stretches are compositionally biased toward low complexity: residues 7 to 21 (QGPAEPSQAAAAAEA) and 28 to 49 (AEGGAQGGDCDSAAGDPDSAAG). Residues 81-107 (VLALKKLQKRCDKIEAKFDKEFQALEK) adopt a coiled-coil conformation. Residues 134–182 (LEGEEEEEEEYEDDEEEGEDEEEEEAAAEAAAGAKHDDAHAEMPDDAKK) form a disordered region. Over residues 135–160 (EGEEEEEEEYEDDEEEGEDEEEEEAA) the composition is skewed to acidic residues. Positions 167–182 (AKHDDAHAEMPDDAKK) are enriched in basic and acidic residues.

Belongs to the nucleosome assembly protein (NAP) family. Predominantly expressed in brain.

The protein resides in the nucleus. The chain is Nucleosome assembly protein 1-like 5 (NAP1L5) from Homo sapiens (Human).